Consider the following 103-residue polypeptide: Large ribosomal subunit protein bL21 (103 aa).

Belongs to the bacterial ribosomal protein bL21 family. Part of the 50S ribosomal subunit. Contacts protein L20.

In terms of biological role, this protein binds to 23S rRNA in the presence of protein L20. The protein is Large ribosomal subunit protein bL21 of Mycobacterium sp. (strain JLS).